We begin with the raw amino-acid sequence, 409 residues long: MAAPGGARRRPLLLLLFAGLVHGASAVFVVKNGNGTACIMADFSATFLTSYDTRSGPQNKSFELPAGAEVSNSSSCGKENASDSSLVITFGRGHTLTLIFTRNATRYEVQLMRFAYNLSDTDTFPNSSSTGVKTVESATDIKADINKTYRCVSETQVNMDNVTVTLRDAAIQAYLSSSNFSREETRCEQDLPTPTTPPQPAPTPAPASPAVFRYNVSGSNGTCLLASMGLQLNVTYRRVDNKTVTREFNVNPNKTTFGGNCSATLATLELHSENLLLLALQFVMNESSSRVFLQGVQLNLTLPDAKEGSFTATNSSLRALQATAGNSYKCNAEQRLRVTSSFSLNMFRVWLQAFRVDGDKFGPVEECQLDENSMLIPIAVGGALAGLVLIVLLAYLIGRKRSHAGYQTI.

The first 25 residues, 1–25 (MAAPGGARRRPLLLLLFAGLVHGAS), serve as a signal peptide directing secretion. The tract at residues 26–187 (AVFVVKNGNG…SNFSREETRC (162 aa)) is first lumenal domain. The Lumenal segment spans residues 26–374 (AVFVVKNGNG…EECQLDENSM (349 aa)). Residues N34, N59, N72, N80, N103, N117, N126, N146, N161, and N179 are each glycosylated (N-linked (GlcNAc...) asparagine). Residues C38 and C76 are joined by a disulfide bond. C151 and C187 are joined by a disulfide. The disordered stretch occupies residues 180-207 (FSREETRCEQDLPTPTTPPQPAPTPAPA). Residues 188-219 (EQDLPTPTTPPQPAPTPAPASPAVFRYNVSGS) are hinge. Residues 194–207 (PTTPPQPAPTPAPA) show a composition bias toward pro residues. N215, N220, N241, N253, N260, N285, N299, and N314 each carry an N-linked (GlcNAc...) asparagine glycan. The second lumenal domain stretch occupies residues 220 to 374 (NGTCLLASMG…EECQLDENSM (155 aa)). C223 and C261 are disulfide-bonded. Cysteines 330 and 367 form a disulfide. A helical transmembrane segment spans residues 375–398 (LIPIAVGGALAGLVLIVLLAYLIG). Residues 399–409 (RKRSHAGYQTI) are Cytoplasmic-facing.

It belongs to the LAMP family. Interacts with ABCB9; this interaction strongly stabilizes ABCB9 and protects ABCB9 against lysosomal degradation. Interacts with FURIN. Interacts with TMEM175; inhibiting the proton channel activity of TMEM175. O- and N-glycosylated; some of the N-glycans attached to LAMP-1 are polylactosaminoglycans.

The protein localises to the lysosome membrane. Its subcellular location is the endosome membrane. It localises to the late endosome membrane. It is found in the cell membrane. The protein resides in the cytolytic granule membrane. Functionally, lysosomal membrane glycoprotein which plays an important role in lysosome biogenesis, lysosomal pH regulation, autophagy and cholesterol homeostasis. Acts as an important regulator of lysosomal lumen pH regulation by acting as a direct inhibitor of the proton channel TMEM175, facilitating lysosomal acidification for optimal hydrolase activity. Also plays an important role in NK-cells cytotoxicity. Mechanistically, participates in cytotoxic granule movement to the cell surface and perforin trafficking to the lytic granule. In addition, protects NK-cells from degranulation-associated damage induced by their own cytotoxic granule content. Presents carbohydrate ligands to selectins. This chain is Lysosome-associated membrane glycoprotein 1 (LAMP1), found in Bos taurus (Bovine).